The following is a 239-amino-acid chain: MADLQTQMKQAVADAAVEQIKDGMVLGLGSGSTAALMIQGLGAKLASGELKDIVGVTTSFQGEVLAAELNIPLLSLNAVSRIDLAIDGADEVDPGFQLIKGGGACHVQEKLVAARADRFVVVVDSTKLVDRLNLGFLLPVEVLPGAWRQVKQQLEALGGSAELRMAQRKAGPVVTDQGNLVLDAKLDGGISDPVALEQTINNIPGVLENGLFVNITDEVLVGEITDGVAGVRSLQKRLS.

Substrate is bound by residues 30–33, 87–90, and 100–103; these read SGST, DGAD, and KGGG. Catalysis depends on E109, which acts as the Proton acceptor. Substrate is bound at residue K127.

The protein belongs to the ribose 5-phosphate isomerase family. As to quaternary structure, homodimer.

The enzyme catalyses aldehydo-D-ribose 5-phosphate = D-ribulose 5-phosphate. It functions in the pathway carbohydrate degradation; pentose phosphate pathway; D-ribose 5-phosphate from D-ribulose 5-phosphate (non-oxidative stage): step 1/1. Its function is as follows. Catalyzes the reversible conversion of ribose-5-phosphate to ribulose 5-phosphate. The sequence is that of Ribose-5-phosphate isomerase A from Synechococcus sp. (strain CC9605).